Reading from the N-terminus, the 199-residue chain is Ribonuclease P protein subunit p25 (199 aa).

The segment covering 1 to 11 (MENFRKVRSEE) has biased composition (basic and acidic residues). 2 disordered regions span residues 1–28 (MENFRKVRSEEAPAGCGAEGGGPGSGPF) and 144–199 (LDPR…DQTA). Pro residues predominate over residues 151-166 (YQPPNPHPGPSSPPAA). Serine 172 and serine 182 each carry phosphoserine.

This sequence belongs to the histone-like Alba family. In terms of assembly, component of nuclear RNase P and RNase MRP ribonucleoproteins. RNase P consists of a catalytic RNA moiety and 10 different protein chains; POP1, POP4, POP5, POP7, RPP14, RPP21, RPP25, RPP30, RPP38 and RPP40. Within the RNase P complex, POP1, POP7 and RPP25 form the 'finger' subcomplex, POP5, RPP14, RPP40 and homodimeric RPP30 form the 'palm' subcomplex, and RPP21, POP4 and RPP38 form the 'wrist' subcomplex. All subunits of the RNase P complex interact with the catalytic RNA. Several subunits of RNase P are also part of the RNase MRP complex. RNase MRP consists of a catalytic RNA moiety and about 8 protein subunits; POP1, POP7, RPP25, RPP30, RPP38, RPP40 and possibly also POP4 and POP5. POP7 forms a heterodimer with RPP25 that binds to the P3 stem loop of the catalytic RNA.

The protein resides in the nucleus. Its subcellular location is the nucleolus. Component of ribonuclease P, a ribonucleoprotein complex that generates mature tRNA molecules by cleaving their 5'-ends. Also a component of the MRP ribonuclease complex, which cleaves pre-rRNA sequences. The protein is Ribonuclease P protein subunit p25 (RPP25) of Homo sapiens (Human).